We begin with the raw amino-acid sequence, 755 residues long: Biodegradative arginine decarboxylase (755 aa).

Position 386 is an N6-(pyridoxal phosphate)lysine (lysine 386).

This sequence belongs to the Orn/Lys/Arg decarboxylase class-I family. In terms of assembly, homodecamer. The basic unit is a homodimer, organized into a ring of giving a pentamer of five homodimers. Requires pyridoxal 5'-phosphate as cofactor.

Its subcellular location is the cytoplasm. It carries out the reaction L-arginine + H(+) = agmatine + CO2. With respect to regulation, homodimers are probably inactive, their assembly into a homodecamer at low pH requires neutralization of negatively charged residues. This uses cytoplasmic protons, contributing pH regulation and stabilizes the homodecamer. In terms of biological role, component of the acid-resistance (AR) system allowing enteric pathogens to survive the acidic environment in the stomach. ADC can be found in two forms: biodegradative (this enzyme) and biosynthetic (speA). The biodegradative form plays a role in regulating pH by consuming proteins. Converts arginine imported by AdiC to agmatine which is then exported by AdiC. This chain is Biodegradative arginine decarboxylase (adiA), found in Escherichia coli (strain K12).